Reading from the N-terminus, the 273-residue chain is Large ribosomal subunit protein uL2 (273 aa).

The interval 223-273 (VVMNPVDHPMGGGEGRSSGGRHPCTPWGVPTKGHKTRSNKSTDKYIVKRRG) is disordered. Basic and acidic residues predominate over residues 262–273 (KSTDKYIVKRRG).

It belongs to the universal ribosomal protein uL2 family. Part of the 50S ribosomal subunit. Forms a bridge to the 30S subunit in the 70S ribosome.

Its function is as follows. One of the primary rRNA binding proteins. Required for association of the 30S and 50S subunits to form the 70S ribosome, for tRNA binding and peptide bond formation. It has been suggested to have peptidyltransferase activity; this is somewhat controversial. Makes several contacts with the 16S rRNA in the 70S ribosome. In Syntrophus aciditrophicus (strain SB), this protein is Large ribosomal subunit protein uL2.